Reading from the N-terminus, the 431-residue chain is Glucose-1-phosphate adenylyltransferase (431 aa).

Residue lysine 39 participates in beta-D-fructose 1,6-bisphosphate binding. Positions 40, 46, and 52 each coordinate AMP. An alpha-D-glucose 1-phosphate-binding site is contributed by tyrosine 114. Residue arginine 130 coordinates AMP. Alpha-D-glucose 1-phosphate is bound by residues glycine 179, 194–195, and serine 212; that span reads EK. Residues glutamate 370 and arginine 386 each contribute to the AMP site. Beta-D-fructose 1,6-bisphosphate contacts are provided by residues 419-423 and 429-431; these read REMLR and QER.

The protein belongs to the bacterial/plant glucose-1-phosphate adenylyltransferase family. Homotetramer.

The enzyme catalyses alpha-D-glucose 1-phosphate + ATP + H(+) = ADP-alpha-D-glucose + diphosphate. It functions in the pathway glycan biosynthesis; glycogen biosynthesis. Its activity is regulated as follows. Allosterically activated by fructose-1,6-bisphosphate (F16BP) and inhibited by AMP. In terms of biological role, involved in the biosynthesis of ADP-glucose, a building block required for the elongation reactions to produce glycogen. Catalyzes the reaction between ATP and alpha-D-glucose 1-phosphate (G1P) to produce pyrophosphate and ADP-Glc. The protein is Glucose-1-phosphate adenylyltransferase of Escherichia fergusonii (strain ATCC 35469 / DSM 13698 / CCUG 18766 / IAM 14443 / JCM 21226 / LMG 7866 / NBRC 102419 / NCTC 12128 / CDC 0568-73).